The sequence spans 88 residues: MIKNAFISFQEQKEESRGSVEFQVFSFTNKIRRLTSHLELHRKDYLSQRGLRKILGKRQRLLAYLSKKNRGRYKELINQLNIRELKTR.

This sequence belongs to the universal ribosomal protein uS15 family. In terms of assembly, part of the 30S ribosomal subunit.

The protein localises to the plastid. It localises to the chloroplast. This is Small ribosomal subunit protein uS15c (rps15) from Nasturtium officinale (Watercress).